The primary structure comprises 619 residues: Lateral signaling target protein 2 homolog (619 aa).

The FYVE-type zinc-finger motif lies at D501–I561. Zn(2+)-binding residues include C507, C510, C523, C526, C531, C534, C553, and C556. The segment at H598–I619 is disordered. The span at D603 to I619 shows a compositional bias: polar residues.

Belongs to the lst-2 family.

In terms of biological role, negative regulator of epidermal growth factor receptor (EGFR) signaling. This chain is Lateral signaling target protein 2 homolog, found in Brugia malayi (Filarial nematode worm).